A 37-amino-acid polypeptide reads, in one-letter code: Cytochrome b6-f complex subunit 5 (37 aa).

The chain crosses the membrane as a helical span at residues 5–25 (LLCGIVLGLIPITLAGLFVAA).

The protein belongs to the PetG family. As to quaternary structure, the 4 large subunits of the cytochrome b6-f complex are cytochrome b6, subunit IV (17 kDa polypeptide, PetD), cytochrome f and the Rieske protein, while the 4 small subunits are PetG, PetL, PetM and PetN. The complex functions as a dimer.

The protein localises to the cellular thylakoid membrane. In terms of biological role, component of the cytochrome b6-f complex, which mediates electron transfer between photosystem II (PSII) and photosystem I (PSI), cyclic electron flow around PSI, and state transitions. PetG is required for either the stability or assembly of the cytochrome b6-f complex. This Cyanothece sp. (strain PCC 7425 / ATCC 29141) protein is Cytochrome b6-f complex subunit 5.